The primary structure comprises 610 residues: Elongation factor 4 (610 aa).

The tr-type G domain maps to 11–193 (EKIRNFSIIA…QIVEKVPAPT (183 aa)). GTP-binding positions include 23 to 28 (DHGKST) and 140 to 143 (NKID).

This sequence belongs to the TRAFAC class translation factor GTPase superfamily. Classic translation factor GTPase family. LepA subfamily.

Its subcellular location is the cell membrane. It carries out the reaction GTP + H2O = GDP + phosphate + H(+). Its function is as follows. Required for accurate and efficient protein synthesis under certain stress conditions. May act as a fidelity factor of the translation reaction, by catalyzing a one-codon backward translocation of tRNAs on improperly translocated ribosomes. Back-translocation proceeds from a post-translocation (POST) complex to a pre-translocation (PRE) complex, thus giving elongation factor G a second chance to translocate the tRNAs correctly. Binds to ribosomes in a GTP-dependent manner. The polypeptide is Elongation factor 4 (Streptococcus pyogenes serotype M2 (strain MGAS10270)).